We begin with the raw amino-acid sequence, 684 residues long: Glycine--tRNA ligase beta subunit (684 aa).

This sequence belongs to the class-II aminoacyl-tRNA synthetase family. In terms of assembly, tetramer of two alpha and two beta subunits.

It is found in the cytoplasm. The enzyme catalyses tRNA(Gly) + glycine + ATP = glycyl-tRNA(Gly) + AMP + diphosphate. The polypeptide is Glycine--tRNA ligase beta subunit (Pseudomonas entomophila (strain L48)).